A 134-amino-acid polypeptide reads, in one-letter code: ATP synthase epsilon chain (134 aa).

This sequence belongs to the ATPase epsilon chain family. As to quaternary structure, F-type ATPases have 2 components, CF(1) - the catalytic core - and CF(0) - the membrane proton channel. CF(1) has five subunits: alpha(3), beta(3), gamma(1), delta(1), epsilon(1). CF(0) has three main subunits: a, b and c.

The protein resides in the cell membrane. Its function is as follows. Produces ATP from ADP in the presence of a proton gradient across the membrane. The polypeptide is ATP synthase epsilon chain (Alkaliphilus oremlandii (strain OhILAs) (Clostridium oremlandii (strain OhILAs))).